Reading from the N-terminus, the 348-residue chain is L-threonine 3-dehydrogenase (348 aa).

Cys42 contributes to the Zn(2+) binding site. Residues Thr44 and His47 each act as charge relay system in the active site. His67, Glu68, Cys97, Cys100, Cys103, and Cys111 together coordinate Zn(2+). NAD(+)-binding positions include Leu179, Glu199, Arg204, 266–268 (LGL), and 291–292 (IT).

This sequence belongs to the zinc-containing alcohol dehydrogenase family. In terms of assembly, homotetramer. It depends on Zn(2+) as a cofactor.

It localises to the cytoplasm. It carries out the reaction L-threonine + NAD(+) = (2S)-2-amino-3-oxobutanoate + NADH + H(+). It participates in amino-acid degradation; L-threonine degradation via oxydo-reductase pathway; glycine from L-threonine: step 1/2. Functionally, catalyzes the NAD(+)-dependent oxidation of L-threonine to 2-amino-3-ketobutyrate. The polypeptide is L-threonine 3-dehydrogenase (Pyrococcus abyssi (strain GE5 / Orsay)).